Consider the following 261-residue polypeptide: Indole-3-glycerol phosphate synthase (261 aa).

The protein belongs to the TrpC family.

It carries out the reaction 1-(2-carboxyphenylamino)-1-deoxy-D-ribulose 5-phosphate + H(+) = (1S,2R)-1-C-(indol-3-yl)glycerol 3-phosphate + CO2 + H2O. It participates in amino-acid biosynthesis; L-tryptophan biosynthesis; L-tryptophan from chorismate: step 4/5. This chain is Indole-3-glycerol phosphate synthase, found in Burkholderia ambifaria (strain MC40-6).